The following is a 449-amino-acid chain: Deoxyguanosinetriphosphate triphosphohydrolase-like protein (449 aa).

Residues 1-27 are disordered; sequence MTSSVWQERRHGEDKQRRNDHRSPYQR. Positions 7–27 are enriched in basic and acidic residues; that stretch reads QERRHGEDKQRRNDHRSPYQR. The region spanning 59 to 255 is the HD domain; it reads RLTHSLEVSQ…MELADDIAYA (197 aa).

Belongs to the dGTPase family. Type 2 subfamily.

This is Deoxyguanosinetriphosphate triphosphohydrolase-like protein from Shewanella baltica (strain OS223).